Reading from the N-terminus, the 825-residue chain is Putative NAD(+)--arginine ADP-ribosyltransferase Mav (825 aa).

Positions 435–673 (ALKGLKKPPG…SGSDHHLPLH (239 aa)) are disordered. Composition is skewed to pro residues over residues 443–457 (PGVP…PAAP) and 468–491 (SGKP…PLPH). The segment covering 560 to 579 (PAADTPAPSAPAASMSAASG) has biased composition (low complexity). Pro residues predominate over residues 580–589 (PPMPPTPSLP). The segment covering 590–599 (EPASLPSGPS) has biased composition (low complexity). In terms of domain architecture, TR mART core spans 650–825 (KNANGHGPHD…GRTIIEMIER (176 aa)). Basic and acidic residues predominate over residues 656-670 (GPHDASLDSGSDHHL). NAD(+) is bound by residues 687-699 (TGPG…FALR), 730-733 (RGTN), and Glu-750. Residue Arg-730 is part of the active site. Residues Ser-755 and Glu-795 contribute to the active site. An NAD(+)-binding site is contributed by Glu-795.

The protein belongs to the Arg-specific ADP-ribosyltransferase family.

It is found in the secreted. It catalyses the reaction L-arginyl-[protein] + NAD(+) = N(omega)-(ADP-D-ribosyl)-L-arginyl-[protein] + nicotinamide + H(+). A probable mono(ADP-ribosyl)transferase, it may ADP-ribosylate Arg in target protein(s). The sequence is that of Putative NAD(+)--arginine ADP-ribosyltransferase Mav from Mycobacterium avium (strain 104).